Here is a 227-residue protein sequence, read N- to C-terminus: Phosphoribosylformylglycinamidine synthase subunit PurQ (227 aa).

One can recognise a Glutamine amidotransferase type-1 domain in the interval 3–225; it reads FAVIVLPGSN…VKNWRETHVT (223 aa). Cys86 functions as the Nucleophile in the catalytic mechanism. Catalysis depends on residues His194 and Glu196.

In terms of assembly, part of the FGAM synthase complex composed of 1 PurL, 1 PurQ and 2 PurS subunits.

The protein resides in the cytoplasm. It carries out the reaction N(2)-formyl-N(1)-(5-phospho-beta-D-ribosyl)glycinamide + L-glutamine + ATP + H2O = 2-formamido-N(1)-(5-O-phospho-beta-D-ribosyl)acetamidine + L-glutamate + ADP + phosphate + H(+). The catalysed reaction is L-glutamine + H2O = L-glutamate + NH4(+). It participates in purine metabolism; IMP biosynthesis via de novo pathway; 5-amino-1-(5-phospho-D-ribosyl)imidazole from N(2)-formyl-N(1)-(5-phospho-D-ribosyl)glycinamide: step 1/2. Part of the phosphoribosylformylglycinamidine synthase complex involved in the purines biosynthetic pathway. Catalyzes the ATP-dependent conversion of formylglycinamide ribonucleotide (FGAR) and glutamine to yield formylglycinamidine ribonucleotide (FGAM) and glutamate. The FGAM synthase complex is composed of three subunits. PurQ produces an ammonia molecule by converting glutamine to glutamate. PurL transfers the ammonia molecule to FGAR to form FGAM in an ATP-dependent manner. PurS interacts with PurQ and PurL and is thought to assist in the transfer of the ammonia molecule from PurQ to PurL. The sequence is that of Phosphoribosylformylglycinamidine synthase subunit PurQ from Bacillus subtilis (strain 168).